Consider the following 264-residue polypeptide: Tritrans,polycis-undecaprenyl-diphosphate synthase (geranylgeranyl-diphosphate specific) (264 aa).

Residue Asp43 is part of the active site. Asp43 serves as a coordination point for Mg(2+). Substrate is bound by residues Gly44–Arg47, Trp48, His60, and Ser88–Glu90. Residue Asn91 is the Proton acceptor of the active site. Substrate contacts are provided by residues Phe92, Arg94, Arg213, and Arg219–Ser221. Glu232 serves as a coordination point for Mg(2+).

The protein belongs to the UPP synthase family. In terms of assembly, homodimer. The cofactor is Mg(2+).

It catalyses the reaction geranylgeranyl diphosphate + 7 isopentenyl diphosphate = tri-trans,hepta-cis-undecaprenyl diphosphate + 7 diphosphate. Its function is as follows. Catalyzes the sequential condensation of isopentenyl diphosphate (IPP) with geranylgeranyl diphosphate (GGPP) to yield (2Z,6Z,10Z,14Z,18Z,22Z,26Z,30E,34E,38E)-undecaprenyl diphosphate (tritrans,heptacis-UPP). It is probably the precursor of glycosyl carrier lipids. This is Tritrans,polycis-undecaprenyl-diphosphate synthase (geranylgeranyl-diphosphate specific) from Pyrococcus horikoshii (strain ATCC 700860 / DSM 12428 / JCM 9974 / NBRC 100139 / OT-3).